Reading from the N-terminus, the 472-residue chain is Envelope glycoprotein O (472 aa).

The signal sequence occupies residues 1 to 31 (MGKKEMIMVKGIPKIMLLISITFLLLSLINC). Asn-109, Asn-136, Asn-163, Asn-168, Asn-177, Asn-225, Asn-248, Asn-294, Asn-298, Asn-356, Asn-391, Asn-398, Asn-405, Asn-439, and Asn-460 each carry an N-linked (GlcNAc...) asparagine; by host glycan.

The protein belongs to the herpesviridae U47 family. Forms the envelope trimer complex composed of gH, gL, and gO. The trimer interacts with host PDGFRA. Post-translationally, N-glycosylated. In terms of processing, the N-terminus is blocked.

Its subcellular location is the virion membrane. Its function is as follows. Plays a role in viral entry into host cells. Forms a trimeric complex at the surface of the viral envelope together with gH and gL. This complex is required for entry in host fibroblasts. Mechanistically, engages host receptor(s) including PDGFRA to mediate infection. This chain is Envelope glycoprotein O (UL74), found in Human cytomegalovirus (strain Merlin) (HHV-5).